A 92-amino-acid polypeptide reads, in one-letter code: Toxin RelE3 (92 aa).

This sequence belongs to the RelE toxin family.

Toxic component of a type II toxin-antitoxin (TA) system. Its toxic effect is neutralized by coexpression with cognate antitoxin RelB3 but no other ParD or RelB antitoxin. This chain is Toxin RelE3 (relE3), found in Caulobacter vibrioides (strain ATCC 19089 / CIP 103742 / CB 15) (Caulobacter crescentus).